We begin with the raw amino-acid sequence, 90 residues long: MAHTKAGGTTRNSRDSAGRRLGVKATDGQFVNAGSIIYRQRGTKIFPGNNVGRGKDDTLFALISGIVKFEDRINRKFASVYAVEDLKAKK.

Residues 1 to 21 form a disordered region; the sequence is MAHTKAGGTTRNSRDSAGRRL.

The protein belongs to the bacterial ribosomal protein bL27 family.

The protein is Large ribosomal subunit protein bL27 of Metamycoplasma arthritidis (strain 158L3-1) (Mycoplasma arthritidis).